A 259-amino-acid chain; its full sequence is Proteasome subunit alpha (259 aa).

This sequence belongs to the peptidase T1A family. As to quaternary structure, the 20S proteasome core is composed of 14 alpha and 14 beta subunits that assemble into four stacked heptameric rings, resulting in a barrel-shaped structure. The two inner rings, each composed of seven catalytic beta subunits, are sandwiched by two outer rings, each composed of seven alpha subunits. The catalytic chamber with the active sites is on the inside of the barrel. Has a gated structure, the ends of the cylinder being occluded by the N-termini of the alpha-subunits. Is capped at one or both ends by the proteasome regulatory ATPase, PAN.

It localises to the cytoplasm. Its activity is regulated as follows. The formation of the proteasomal ATPase PAN-20S proteasome complex, via the docking of the C-termini of PAN into the intersubunit pockets in the alpha-rings, triggers opening of the gate for substrate entry. Interconversion between the open-gate and close-gate conformations leads to a dynamic regulation of the 20S proteasome proteolysis activity. Its function is as follows. Component of the proteasome core, a large protease complex with broad specificity involved in protein degradation. The chain is Proteasome subunit alpha from Methanococcus maripaludis (strain C5 / ATCC BAA-1333).